The primary structure comprises 142 residues: MAKKIQSYIKLQVAAGMANPSPPIGPALGQKGVNIMEFCKLFNKTTENVEKGLPIPVIVTVYSDRSFTFITKTPPASVLLKKAAGIKSGSSKPKIETTGKITKLQIEEIAKTKKNDMTGLNIESMMRSIEGTAKSMGLIVED.

It belongs to the universal ribosomal protein uL11 family. Part of the ribosomal stalk of the 50S ribosomal subunit. Interacts with L10 and the large rRNA to form the base of the stalk. L10 forms an elongated spine to which L12 dimers bind in a sequential fashion forming a multimeric L10(L12)X complex. One or more lysine residues are methylated.

Functionally, forms part of the ribosomal stalk which helps the ribosome interact with GTP-bound translation factors. The protein is Large ribosomal subunit protein uL11 of Buchnera aphidicola subsp. Schizaphis graminum (strain Sg).